The sequence spans 167 residues: uncharacterized protein (167 aa).

2 DED domains span residues 2-75 (DLKT…NLFQ) and 93-167 (THVL…AKTV).

This is an uncharacterized protein from Saimiriine herpesvirus 2 (strain 11) (SaHV-2).